The following is a 317-amino-acid chain: Glycine--tRNA ligase alpha subunit (317 aa).

Belongs to the class-II aminoacyl-tRNA synthetase family. As to quaternary structure, tetramer of two alpha and two beta subunits.

The protein resides in the cytoplasm. It catalyses the reaction tRNA(Gly) + glycine + ATP = glycyl-tRNA(Gly) + AMP + diphosphate. In Leptothrix cholodnii (strain ATCC 51168 / LMG 8142 / SP-6) (Leptothrix discophora (strain SP-6)), this protein is Glycine--tRNA ligase alpha subunit.